The primary structure comprises 151 residues: Small ribosomal subunit protein uS15 (151 aa).

The protein belongs to the universal ribosomal protein uS15 family. In terms of assembly, component of the small ribosomal subunit.

The protein localises to the cytoplasm. In terms of biological role, component of the small ribosomal subunit. The ribosome is a large ribonucleoprotein complex responsible for the synthesis of proteins in the cell. The polypeptide is Small ribosomal subunit protein uS15 (rps13) (Gillichthys mirabilis (Long-jawed mudsucker)).